We begin with the raw amino-acid sequence, 318 residues long: Quinolinate synthase (318 aa).

Iminosuccinate-binding residues include H34 and S51. A [4Fe-4S] cluster-binding site is contributed by C96. Iminosuccinate-binding positions include 122–124 (YIN) and S139. Residue C182 coordinates [4Fe-4S] cluster. Iminosuccinate contacts are provided by residues 208–210 (HPE) and T225. Residue C275 participates in [4Fe-4S] cluster binding.

This sequence belongs to the quinolinate synthase family. Type 2 subfamily. Requires [4Fe-4S] cluster as cofactor.

The protein resides in the cytoplasm. The enzyme catalyses iminosuccinate + dihydroxyacetone phosphate = quinolinate + phosphate + 2 H2O + H(+). It participates in cofactor biosynthesis; NAD(+) biosynthesis; quinolinate from iminoaspartate: step 1/1. Its function is as follows. Catalyzes the condensation of iminoaspartate with dihydroxyacetone phosphate to form quinolinate. The protein is Quinolinate synthase of Synechocystis sp. (strain ATCC 27184 / PCC 6803 / Kazusa).